Here is a 470-residue protein sequence, read N- to C-terminus: Acetyl-CoA decarbonylase/synthase complex subunit gamma 1 (470 aa).

The 60-residue stretch at 1 to 60 folds into the 4Fe-4S domain; the sequence is MKINSPLEAYKYLPQTNCGECGQPTCMAFASTLIDRSGKTTDCPPLIKEKKFAKKLAELD. Residues C18, C21, C26, and C43 each contribute to the [4Fe-4S] cluster site.

Heterodimer of delta and gamma chains. The ACDS complex is made up of alpha, epsilon, beta, gamma and delta chains with a probable stoichiometry of (alpha(2)epsilon(2))(4)-beta(8)-(gamma(1)delta(1))(8). The cofactor is corrinoid. [4Fe-4S] cluster is required as a cofactor.

The enzyme catalyses 5,6,7,8-tetrahydrosarcinapterin + methyl-Co(III)-[corrinoid Fe-S protein] = 5-methyltetrahydrosarcinapterin + Co(I)-[corrinoid Fe-S protein] + H(+). Its pathway is one-carbon metabolism; methanogenesis from acetate. Part of a complex that catalyzes the reversible cleavage of acetyl-CoA, allowing growth on acetate as sole source of carbon and energy. The protein is Acetyl-CoA decarbonylase/synthase complex subunit gamma 1 of Methanosarcina mazei (strain ATCC BAA-159 / DSM 3647 / Goe1 / Go1 / JCM 11833 / OCM 88) (Methanosarcina frisia).